The chain runs to 373 residues: Molybdenum import ATP-binding protein ModC (373 aa).

The ABC transporter domain maps to 4 to 240; sequence LTPPTIRAAF…PKLPLAIARD (237 aa). 38–45 provides a ligand contact to ATP; that stretch reads GPSGCGKS. In terms of domain architecture, Mop spans 299-369; it reads ASSILNAIAA…IKGVALAPGR (71 aa).

It belongs to the ABC transporter superfamily. Molybdate importer (TC 3.A.1.8) family. As to quaternary structure, the complex is composed of two ATP-binding proteins (ModC), two transmembrane proteins (ModB) and a solute-binding protein (ModA).

The protein localises to the cell inner membrane. The enzyme catalyses molybdate(out) + ATP + H2O = molybdate(in) + ADP + phosphate + H(+). Part of the ABC transporter complex ModABC involved in molybdenum import. Responsible for energy coupling to the transport system. This Rhodopseudomonas palustris (strain ATCC BAA-98 / CGA009) protein is Molybdenum import ATP-binding protein ModC.